Reading from the N-terminus, the 293-residue chain is Energy-coupling factor transporter ATP-binding protein EcfA2 (293 aa).

In terms of domain architecture, ABC transporter spans 3–246 (ITFQKVEHRY…ADELEKIGVD (244 aa)). 40–47 (GHTGSGKS) contacts ATP.

Belongs to the ABC transporter superfamily. Energy-coupling factor EcfA family. Forms a stable energy-coupling factor (ECF) transporter complex composed of 2 membrane-embedded substrate-binding proteins (S component), 2 ATP-binding proteins (A component) and 2 transmembrane proteins (T component).

The protein resides in the cell membrane. Functionally, ATP-binding (A) component of a common energy-coupling factor (ECF) ABC-transporter complex. Unlike classic ABC transporters this ECF transporter provides the energy necessary to transport a number of different substrates. This is Energy-coupling factor transporter ATP-binding protein EcfA2 from Bacillus cereus (strain ATCC 10987 / NRS 248).